Reading from the N-terminus, the 198-residue chain is tRNA (pseudouridine(54)-N(1))-methyltransferase (198 aa).

S-adenosyl-L-methionine is bound by residues L130, G153, 176-181 (LSPLEL), and C186.

The protein belongs to the methyltransferase superfamily. TrmY family. Homodimer.

The protein resides in the cytoplasm. The catalysed reaction is pseudouridine(54) in tRNA + S-adenosyl-L-methionine = N(1)-methylpseudouridine(54) in tRNA + S-adenosyl-L-homocysteine + H(+). In terms of biological role, specifically catalyzes the N1-methylation of pseudouridine at position 54 (Psi54) in tRNAs. This Methanococcus maripaludis (strain C6 / ATCC BAA-1332) protein is tRNA (pseudouridine(54)-N(1))-methyltransferase.